The sequence spans 1312 residues: DNA repair protein RAD50 (1312 aa).

ATP contacts are provided by arginine 13, asparagine 36, glycine 37, glycine 39, lysine 40, threonine 41, threonine 42, isoleucine 65, aspartate 67, and glutamine 158. Threonine 41 is a Mg(2+) binding site. Glutamine 158 is a Mg(2+) binding site. Coiled coils occupy residues 185 to 347 and 403 to 558; these read TKAL…LIRR and QDLT…LQND. Phosphoserine is present on serine 469. Threonine 568 carries the phosphothreonine modification. Residues 640–678 adopt a coiled-coil conformation; sequence DCTIDEYNDVLEETELSYKTALENLKMHQTTLEFNRKAL. The Zinc-hook domain occupies 640 to 741; sequence DCTIDEYNDV…SLRLLEKHII (102 aa). 2 residues coordinate Zn(2+): cysteine 687 and cysteine 690. Coiled-coil stretches lie at residues 712–741 and 787–1108; these read DANF…KHII and LAES…DIEK.

This sequence belongs to the SMC family. RAD50 subfamily. In terms of assembly, component of the MRN complex composed of two heterodimers RAD50 and MRE11 associated with a single XRS2. The MRN complexes dimerize on DNA to form joined MRN-MRN oligomers required for DNA double-strand break repair. Requires Zn(2+) as cofactor.

The protein resides in the nucleus. The protein localises to the chromosome. The catalysed reaction is ATP + H2O = ADP + phosphate + H(+). In terms of biological role, component of the MRN complex, which plays a central role in double-strand break (DSB) repair, DNA recombination, maintenance of telomere integrity and meiosis. The MRN complex is involved in the repair of DNA double-strand breaks (DSBs) via homologous recombination (HR), an error-free mechanism which primarily occurs during S and G2 phases. The complex (1) mediates the end resection of damaged DNA, which generates proper single-stranded DNA, a key initial steps in HR, and is (2) required for the recruitment of other repair factors and efficient activation of TEL1/ATM and ATR upon DNA damage. The MRN complex possesses single-strand endonuclease activity and double-strand-specific 3'-5' exonuclease activity, which are provided by MRE11, to initiate end resection, which is required for single-strand invasion and recombination. Within the complex, RAD50 is both required to bind DNA ends and hold them in close proximity and regulate the activity of MRE11. RAD50 provides an ATP-dependent control of MRE11 by positioning DNA ends into the MRE11 active site: ATP-binding induces a large structural change from an open form with accessible MRE11 nuclease sites into a closed form. The MRN complex is also required for the processing of R-loops. The chain is DNA repair protein RAD50 from Saccharomyces cerevisiae (strain ATCC 204508 / S288c) (Baker's yeast).